Consider the following 537-residue polypeptide: Glutamyl-tRNA reductase, chloroplastic (537 aa).

The N-terminal 48 residues, 1 to 48, are a transit peptide targeting the chloroplast; the sequence is MMASTTSATAAGGAFAAAKTRAGSSAAGGGACARVAAGGRRRSGVVVR. Residues 134–137, S194, 199–201, and Q205 contribute to the substrate site; these read TCNR and EGQ. C135 acts as the Nucleophile in catalysis. 276 to 281 contacts NADP(+); sequence GAGKMG.

Belongs to the glutamyl-tRNA reductase family.

It localises to the plastid. The protein localises to the chloroplast. The enzyme catalyses (S)-4-amino-5-oxopentanoate + tRNA(Glu) + NADP(+) = L-glutamyl-tRNA(Glu) + NADPH + H(+). It participates in porphyrin-containing compound metabolism; protoporphyrin-IX biosynthesis; 5-aminolevulinate from L-glutamyl-tRNA(Glu): step 1/2. Catalyzes the NADPH-dependent reduction of glutamyl-tRNA(Glu) to glutamate 1-semialdehyde (GSA). The protein is Glutamyl-tRNA reductase, chloroplastic of Oryza sativa subsp. japonica (Rice).